Here is a 150-residue protein sequence, read N- to C-terminus: Cell division protein SepF (150 aa).

It belongs to the SepF family. As to quaternary structure, homodimer. Interacts with FtsZ.

Its subcellular location is the cytoplasm. Cell division protein that is part of the divisome complex and is recruited early to the Z-ring. Probably stimulates Z-ring formation, perhaps through the cross-linking of FtsZ protofilaments. Its function overlaps with FtsA. This Clostridium botulinum (strain Kyoto / Type A2) protein is Cell division protein SepF.